The primary structure comprises 182 residues: Ribosome-recycling factor (182 aa).

It belongs to the RRF family.

Its subcellular location is the cytoplasm. Functionally, responsible for the release of ribosomes from messenger RNA at the termination of protein biosynthesis. May increase the efficiency of translation by recycling ribosomes from one round of translation to another. This is Ribosome-recycling factor from Nostoc punctiforme (strain ATCC 29133 / PCC 73102).